Reading from the N-terminus, the 65-residue chain is Large ribosomal subunit protein bL33m (65 aa).

Residues 1–8 (MFLTTANL) constitute a mitochondrion transit peptide.

The protein belongs to the bacterial ribosomal protein bL33 family. In terms of assembly, component of the mitochondrial ribosome large subunit (39S) which comprises a 16S rRNA and about 50 distinct proteins.

Its subcellular location is the mitochondrion. The polypeptide is Large ribosomal subunit protein bL33m (mrpl33) (Tetraodon nigroviridis (Spotted green pufferfish)).